Here is a 154-residue protein sequence, read N- to C-terminus: UPF0260 protein HI_1355 (154 aa).

It belongs to the UPF0260 family.

The polypeptide is UPF0260 protein HI_1355 (Haemophilus influenzae (strain ATCC 51907 / DSM 11121 / KW20 / Rd)).